The sequence spans 443 residues: MSKLNMTPREIVAYLDEYIIEQKEAKKFIAIALRNRYRRLQLEKSLQEEITPKNILMIGSTGVGKTEIARRMAKIMKLPFVKVEASKYTEVGFVGRDVESMVRDLVNNSVLLVENEHKERLKDKIEEAVVEKIAKKLLPPLPSGVSEEKKQEYANSLLKMQQRIAQGELDSREIEIEVRKKSIEIDSNVPPEILRVQENLIKVFHKEQDKVKKTLSVKEAKEALKAEISDTLLDGEAIKMEGLKRAESSGVIFIDEIDKIAVSSKEGSRQDPSKEGVQRDLLPIVEGSVVNTKYGSIKTEHILFIAAGAFHLSKPSDLIPELQGRFPLRVELENLTEEIMYMILTQTKTSIIKQYQALLKVEGVEIAFEDDAIKELAKLSYNANQKSEDIGARRLHTTIEKVLEDISFEAEDYSGQSVTITKELVQSKLGDLVADENLVKYIL.

Residues Ile20, 62 to 67 (GVGKTE), Asp255, Glu321, and Arg393 each bind ATP.

This sequence belongs to the ClpX chaperone family. HslU subfamily. A double ring-shaped homohexamer of HslV is capped on each side by a ring-shaped HslU homohexamer. The assembly of the HslU/HslV complex is dependent on binding of ATP.

Its subcellular location is the cytoplasm. Its function is as follows. ATPase subunit of a proteasome-like degradation complex; this subunit has chaperone activity. The binding of ATP and its subsequent hydrolysis by HslU are essential for unfolding of protein substrates subsequently hydrolyzed by HslV. HslU recognizes the N-terminal part of its protein substrates and unfolds these before they are guided to HslV for hydrolysis. This chain is ATP-dependent protease ATPase subunit HslU, found in Helicobacter pylori (strain J99 / ATCC 700824) (Campylobacter pylori J99).